Here is a 279-residue protein sequence, read N- to C-terminus: Thioredoxin-like 1-2, chloroplastic (279 aa).

The transit peptide at 1–34 (MAATAAQAVAVKGSVAVPPCGSRGRRRGAVASVR) directs the protein to the chloroplast. The Thioredoxin domain maps to 61-203 (PRRSRPVPRN…FRDALAKHKP (143 aa)). Residues C126 and C129 each act as nucleophile in the active site. C126 and C129 are oxidised to a cystine. Residues 242–279 (GDAAAAQELDRGSTKLSPPAKPLVKQGSEERSLVSSGR) form a disordered region.

This sequence belongs to the thioredoxin family.

It is found in the plastid. The protein resides in the chloroplast. Functionally, probable thiol-disulfide oxidoreductase that may participate in various redox reactions. In Oryza sativa subsp. japonica (Rice), this protein is Thioredoxin-like 1-2, chloroplastic.